The sequence spans 301 residues: MDDAKNSAVDVLEKQAAFLSSALPYMQKYENETVVVKYGGHAMGDPALGRAFARDIALLKQSGINPVVVHGGGPQIAEILMKMGIESRFENGLRVTDERIVEVVEMVLAGSINKEIVALINAEGEWAIGLCGKDGNMVFAEKAYRTVIDPDSHIERVLDLGFVGEPIEVDRTLLDLLACSEMIPVLAPVAPGRDGKTYNINADIFAGAIAGALEAKRLLFLTDVPGVLDKQGKLLKELTVSEAEKLIKNGTISGGMIPKVETCVKALQNGVEGVVILNGKTPHSVLLELFTEQGVGTLIVS.

Substrate is bound by residues Gly72 to Gly73, Arg94, and Asn199.

Belongs to the acetylglutamate kinase family. ArgB subfamily.

The protein resides in the cytoplasm. It carries out the reaction N-acetyl-L-glutamate + ATP = N-acetyl-L-glutamyl 5-phosphate + ADP. The protein operates within amino-acid biosynthesis; L-arginine biosynthesis; N(2)-acetyl-L-ornithine from L-glutamate: step 2/4. Catalyzes the ATP-dependent phosphorylation of N-acetyl-L-glutamate. The protein is Acetylglutamate kinase of Bartonella tribocorum (strain CIP 105476 / IBS 506).